Here is a 677-residue protein sequence, read N- to C-terminus: Methionine--tRNA ligase (677 aa).

The 'HIGH' region motif lies at 15-25 (PYANGSIHLGH). Cys146, Cys149, Cys159, and Cys162 together coordinate Zn(2+). The 'KMSKS' region signature appears at 333 to 337 (KMSKS). Lys336 contributes to the ATP binding site. Positions 575–677 (DFAKIDLRVA…DGAKPGQQVK (103 aa)) constitute a tRNA-binding domain.

This sequence belongs to the class-I aminoacyl-tRNA synthetase family. MetG type 1 subfamily. As to quaternary structure, homodimer. Zn(2+) serves as cofactor.

Its subcellular location is the cytoplasm. It catalyses the reaction tRNA(Met) + L-methionine + ATP = L-methionyl-tRNA(Met) + AMP + diphosphate. Functionally, is required not only for elongation of protein synthesis but also for the initiation of all mRNA translation through initiator tRNA(fMet) aminoacylation. This is Methionine--tRNA ligase from Salmonella paratyphi C (strain RKS4594).